Reading from the N-terminus, the 463-residue chain is D-inositol 3-phosphate glycosyltransferase (463 aa).

H40 is a binding site for 1D-myo-inositol 3-phosphate. UDP-N-acetyl-alpha-D-glucosamine is bound by residues 46–47 and G54; that span reads QP. 1D-myo-inositol 3-phosphate is bound by residues 51–56, K109, Y142, T166, and R186; that span reads DAGGMN. UDP-N-acetyl-alpha-D-glucosamine is bound by residues R260, K265, and Q318. Mg(2+) contacts are provided by F327, H328, and V330. The UDP-N-acetyl-alpha-D-glucosamine site is built by E340 and E348. T354 lines the Mg(2+) pocket. A disordered region spans residues 443–463; sequence VRDPVAARKPRRWTARRGVGA.

Belongs to the glycosyltransferase group 1 family. MshA subfamily. In terms of assembly, homodimer.

It carries out the reaction 1D-myo-inositol 3-phosphate + UDP-N-acetyl-alpha-D-glucosamine = 1D-myo-inositol 2-acetamido-2-deoxy-alpha-D-glucopyranoside 3-phosphate + UDP + H(+). Functionally, catalyzes the transfer of a N-acetyl-glucosamine moiety to 1D-myo-inositol 3-phosphate to produce 1D-myo-inositol 2-acetamido-2-deoxy-glucopyranoside 3-phosphate in the mycothiol biosynthesis pathway. The sequence is that of D-inositol 3-phosphate glycosyltransferase from Mycobacterium ulcerans (strain Agy99).